The primary structure comprises 398 residues: Stearoyl-[acyl-carrier-protein] 9-desaturase, chloroplastic (398 aa).

Residues 1-34 (MALKLHHTAFNPSMAVTSSGLPRSYHLRSHRVFM) constitute a chloroplast transit peptide. The tract at residues 46-66 (IPNAKKPHMPPREAHVQKTHS) is disordered. Glu140, Glu178, His181, Glu231, Glu264, and His267 together coordinate Fe cation.

Belongs to the fatty acid desaturase type 2 family. Homodimer. Fe(2+) is required as a cofactor.

It is found in the plastid. It localises to the chloroplast. It carries out the reaction octadecanoyl-[ACP] + 2 reduced [2Fe-2S]-[ferredoxin] + O2 + 2 H(+) = (9Z)-octadecenoyl-[ACP] + 2 oxidized [2Fe-2S]-[ferredoxin] + 2 H2O. Its pathway is lipid metabolism; fatty acid metabolism. In terms of biological role, converts stearoyl-ACP to oleoyl-ACP by introduction of a cis double bond between carbons 9 and 10 of the acyl chain. The chain is Stearoyl-[acyl-carrier-protein] 9-desaturase, chloroplastic from Simmondsia chinensis (Jojoba).